Here is a 268-residue protein sequence, read N- to C-terminus: tRNA pseudouridine synthase A (268 aa).

Catalysis depends on aspartate 54, which acts as the Nucleophile. Residue tyrosine 112 coordinates substrate.

It belongs to the tRNA pseudouridine synthase TruA family. Homodimer.

The enzyme catalyses uridine(38/39/40) in tRNA = pseudouridine(38/39/40) in tRNA. Its function is as follows. Formation of pseudouridine at positions 38, 39 and 40 in the anticodon stem and loop of transfer RNAs. This chain is tRNA pseudouridine synthase A, found in Bordetella petrii (strain ATCC BAA-461 / DSM 12804 / CCUG 43448).